A 74-amino-acid chain; its full sequence is Cytochrome c oxidase assembly factor 5 (74 aa).

Positions 27–65 (QSDCVLKEGKSPRQCLKEGNCKALKYSFFECKRSMLDAR) constitute a CHCH domain. The Cx10C motif signature appears at 30-41 (CVLKEGKSPRQC). 2 disulfide bridges follow: Cys30/Cys57 and Cys41/Cys47. Ser37 carries the phosphoserine modification. The Cx9C motif signature appears at 47-57 (CKALKYSFFEC).

The protein belongs to the PET191 family.

Its function is as follows. Involved in an early step of the mitochondrial complex IV assembly process. The sequence is that of Cytochrome c oxidase assembly factor 5 (COA5) from Bos taurus (Bovine).